The following is an 884-amino-acid chain: DNA mismatch repair protein MutS (884 aa).

ATP is bound at residue 643–650 (GPNMGGKS).

This sequence belongs to the DNA mismatch repair MutS family.

In terms of biological role, this protein is involved in the repair of mismatches in DNA. It is possible that it carries out the mismatch recognition step. This protein has a weak ATPase activity. The sequence is that of DNA mismatch repair protein MutS from Methylobacillus flagellatus (strain ATCC 51484 / DSM 6875 / VKM B-1610 / KT).